Consider the following 508-residue polypeptide: Light-independent protochlorophyllide reductase subunit B (508 aa).

Residue Asp36 coordinates [4Fe-4S] cluster. The active-site Proton donor is Asp282. 417-418 (GL) serves as a coordination point for substrate.

This sequence belongs to the ChlB/BchB/BchZ family. As to quaternary structure, protochlorophyllide reductase is composed of three subunits; BchL, BchN and BchB. Forms a heterotetramer of two BchB and two BchN subunits. The cofactor is [4Fe-4S] cluster.

The catalysed reaction is chlorophyllide a + oxidized 2[4Fe-4S]-[ferredoxin] + 2 ADP + 2 phosphate = protochlorophyllide a + reduced 2[4Fe-4S]-[ferredoxin] + 2 ATP + 2 H2O. It functions in the pathway porphyrin-containing compound metabolism; bacteriochlorophyll biosynthesis (light-independent). Its function is as follows. Component of the dark-operative protochlorophyllide reductase (DPOR) that uses Mg-ATP and reduced ferredoxin to reduce ring D of protochlorophyllide (Pchlide) to form chlorophyllide a (Chlide). This reaction is light-independent. The NB-protein (BchN-BchB) is the catalytic component of the complex. The polypeptide is Light-independent protochlorophyllide reductase subunit B (Methylocella silvestris (strain DSM 15510 / CIP 108128 / LMG 27833 / NCIMB 13906 / BL2)).